The primary structure comprises 187 residues: Dirigent protein 23 (187 aa).

Residues 1–24 (MAKEEYVSRMLVMLIMIMPLVAQG) form the signal peptide. N-linked (GlcNAc...) asparagine glycosylation occurs at N182.

This sequence belongs to the plant dirigent protein family. As to quaternary structure, homodimer.

It is found in the secreted. The protein localises to the extracellular space. Its subcellular location is the apoplast. Its function is as follows. Dirigent proteins impart stereoselectivity on the phenoxy radical-coupling reaction, yielding optically active lignans from two molecules of coniferyl alcohol in the biosynthesis of lignans, flavonolignans, and alkaloids and thus plays a central role in plant secondary metabolism. This chain is Dirigent protein 23 (DIR23), found in Arabidopsis thaliana (Mouse-ear cress).